The primary structure comprises 120 residues: Ribonuclease P protein component (120 aa).

The protein belongs to the RnpA family. In terms of assembly, consists of a catalytic RNA component (M1 or rnpB) and a protein subunit.

It carries out the reaction Endonucleolytic cleavage of RNA, removing 5'-extranucleotides from tRNA precursor.. Its function is as follows. RNaseP catalyzes the removal of the 5'-leader sequence from pre-tRNA to produce the mature 5'-terminus. It can also cleave other RNA substrates such as 4.5S RNA. The protein component plays an auxiliary but essential role in vivo by binding to the 5'-leader sequence and broadening the substrate specificity of the ribozyme. In Acidothermus cellulolyticus (strain ATCC 43068 / DSM 8971 / 11B), this protein is Ribonuclease P protein component.